The following is a 111-amino-acid chain: MIWLTLVFASLLSVAGQLCQKQATCFAAVNKRRKHIVLWLGLALACLGLAMVLWLLVLQNVPVGIAYPMLSLNFVWVTLAAVKLWHEPVSLRHWCGVAFIIGGIVILGSTV.

Residues 1 to 35 are Cytoplasmic-facing; sequence MIWLTLVFASLLSVAGQLCQKQATCFAAVNKRRKH. The helical transmembrane segment at 36-56 threads the bilayer; the sequence is IVLWLGLALACLGLAMVLWLL. The 70-residue stretch at 40–109 folds into the EamA domain; sequence LGLALACLGL…IIGGIVILGS (70 aa). Residues 57-60 are Periplasmic-facing; sequence VLQN. A helical transmembrane segment spans residues 61–81; the sequence is VPVGIAYPMLSLNFVWVTLAA. Topologically, residues 82 to 87 are cytoplasmic; the sequence is VKLWHE. Residues 88-108 traverse the membrane as a helical segment; that stretch reads PVSLRHWCGVAFIIGGIVILG. Topologically, residues 109–111 are periplasmic; it reads STV.

The protein belongs to the ArnE family. In terms of assembly, heterodimer of ArnE and ArnF.

It is found in the cell inner membrane. The protein operates within bacterial outer membrane biogenesis; lipopolysaccharide biosynthesis. Functionally, translocates 4-amino-4-deoxy-L-arabinose-phosphoundecaprenol (alpha-L-Ara4N-phosphoundecaprenol) from the cytoplasmic to the periplasmic side of the inner membrane. This is Probable 4-amino-4-deoxy-L-arabinose-phosphoundecaprenol flippase subunit ArnE from Escherichia coli (strain UTI89 / UPEC).